The primary structure comprises 443 residues: Threonine/serine transporter TdcC (443 aa).

Transmembrane regions (helical) follow at residues Thr22 to Ile42, Ala44 to Phe64, Gly97 to Val117, Phe140 to Met160, Val163 to Ile183, Ile207 to Ile227, Met261 to Ala281, Phe311 to Phe331, Leu366 to Leu386, Ile389 to Ile409, and Asp423 to Phe443.

This sequence belongs to the amino acid/polyamine transporter 2 family. SdaC/TdcC subfamily.

The protein resides in the cell inner membrane. The enzyme catalyses L-threonine(in) + H(+)(in) = L-threonine(out) + H(+)(out). The catalysed reaction is L-serine(in) + H(+)(in) = L-serine(out) + H(+)(out). Its function is as follows. Involved in the import of threonine and serine into the cell, with the concomitant import of a proton (symport system). This chain is Threonine/serine transporter TdcC, found in Shigella flexneri serotype 5b (strain 8401).